The following is a 75-amino-acid chain: Peptide Ctri9610 (75 aa).

The first 22 residues, methionine 1 to glycine 22, serve as a signal peptide directing secretion. At lysine 41 the chain carries Lysine amide. A propeptide spanning residues glycine 42–tyrosine 75 is cleaved from the precursor.

The protein belongs to the non-disulfide-bridged peptide (NDBP) superfamily. Short antimicrobial peptide (group 4) family. As to expression, expressed by the venom gland.

It is found in the secreted. The sequence is that of Peptide Ctri9610 from Chaerilus tricostatus (Scorpion).